The primary structure comprises 346 residues: Sensor histidine kinase GraS (346 aa).

Transmembrane regions (helical) follow at residues 15 to 35 (INWILWILFLNIILLGVAYID) and 43 to 63 (VFYIVILNVGLSILFLLFTFV). The 207-residue stretch at 126–332 (EFVHDIKTPV…TFYFIFPQQN (207 aa)) folds into the Histidine kinase domain. At His129 the chain carries Phosphohistidine; by autocatalysis.

Post-translationally, autophosphorylated.

It is found in the cell membrane. It carries out the reaction ATP + protein L-histidine = ADP + protein N-phospho-L-histidine.. Member of the two-component regulatory system GraR/GraS involved in resistance against cationic antimicrobial peptides (CAMPs). GraS probably functions as a sensor protein kinase which is autophosphorylated at a histidine residue and transfers its phosphate group to GraR. In Staphylococcus epidermidis (strain ATCC 35984 / DSM 28319 / BCRC 17069 / CCUG 31568 / BM 3577 / RP62A), this protein is Sensor histidine kinase GraS (graS).